Reading from the N-terminus, the 125-residue chain is Small ribosomal subunit protein uS12 (125 aa).

D89 is subject to 3-methylthioaspartic acid. The disordered stretch occupies residues 100–125 (GSLDTQGVKDRKQSRSKYGAKRPKAA). A compositionally biased stretch (basic residues) spans 113–125 (SRSKYGAKRPKAA).

This sequence belongs to the universal ribosomal protein uS12 family. Part of the 30S ribosomal subunit. Contacts proteins S8 and S17. May interact with IF1 in the 30S initiation complex.

In terms of biological role, with S4 and S5 plays an important role in translational accuracy. Interacts with and stabilizes bases of the 16S rRNA that are involved in tRNA selection in the A site and with the mRNA backbone. Located at the interface of the 30S and 50S subunits, it traverses the body of the 30S subunit contacting proteins on the other side and probably holding the rRNA structure together. The combined cluster of proteins S8, S12 and S17 appears to hold together the shoulder and platform of the 30S subunit. This is Small ribosomal subunit protein uS12 from Dechloromonas aromatica (strain RCB).